We begin with the raw amino-acid sequence, 396 residues long: 1-deoxy-D-xylulose 5-phosphate reductoisomerase (396 aa).

NADPH-binding residues include Thr-10, Gly-11, Ser-12, Ile-13, Gly-36, Lys-37, Asn-38, and Asn-124. Lys-125 is a 1-deoxy-D-xylulose 5-phosphate binding site. An NADPH-binding site is contributed by Glu-126. Asp-150 serves as a coordination point for Mn(2+). 4 residues coordinate 1-deoxy-D-xylulose 5-phosphate: Ser-151, Glu-152, Ser-186, and His-209. Glu-152 lines the Mn(2+) pocket. Gly-215 provides a ligand contact to NADPH. Residues Ser-222, Asn-227, Lys-228, and Glu-231 each coordinate 1-deoxy-D-xylulose 5-phosphate. Glu-231 contacts Mn(2+).

This sequence belongs to the DXR family. The cofactor is Mg(2+). Mn(2+) serves as cofactor.

It catalyses the reaction 2-C-methyl-D-erythritol 4-phosphate + NADP(+) = 1-deoxy-D-xylulose 5-phosphate + NADPH + H(+). It participates in isoprenoid biosynthesis; isopentenyl diphosphate biosynthesis via DXP pathway; isopentenyl diphosphate from 1-deoxy-D-xylulose 5-phosphate: step 1/6. Its function is as follows. Catalyzes the NADPH-dependent rearrangement and reduction of 1-deoxy-D-xylulose-5-phosphate (DXP) to 2-C-methyl-D-erythritol 4-phosphate (MEP). The polypeptide is 1-deoxy-D-xylulose 5-phosphate reductoisomerase (Haemophilus ducreyi (strain 35000HP / ATCC 700724)).